We begin with the raw amino-acid sequence, 132 residues long: Nucleoid-associated protein EspR (132 aa).

The segment at residues 38 to 50 (ITMSAPYLSQLRS) is a DNA-binding region (H-T-H motif).

As to quaternary structure, homodimer. Binds DNA as a dimer of dimers.

It localises to the cytoplasm. It is found in the nucleoid. Functionally, virulence regulator that has both architectural and regulatory roles. Impacts cell wall functions and pathogenesis through regulation of multiple genes. This is Nucleoid-associated protein EspR from Mycobacterium tuberculosis (strain CDC 1551 / Oshkosh).